The following is a 367-amino-acid chain: Zinc metalloproteinase nas-22 (367 aa).

A signal peptide spans 1 to 16; the sequence is MKSFFILLSILQECYG. The Peptidase M12A domain maps to 41–237; the sequence is VLIRGSDEER…LMINKYYECS (197 aa). N-linked (GlcNAc...) asparagine glycosylation is found at Asn-56 and Asn-85. 4 disulfide bridges follow: Cys-88/Cys-236, Cys-111/Cys-130, Cys-238/Cys-258, and Cys-260/Cys-269. His-138 is a Zn(2+) binding site. The active site involves Glu-139. His-142 and His-148 together coordinate Zn(2+). 3 N-linked (GlcNAc...) asparagine glycosylation sites follow: Asn-169, Asn-241, and Asn-254. Residues 232–270 form the EGF-like domain; it reads KYYECSCANNLSCKNHGYPNPSNCSQCNCPYGFGGADCS. N-linked (GlcNAc...) asparagine glycosylation is found at Asn-287 and Asn-322.

Zn(2+) serves as cofactor. As to expression, expressed in uterine seam (utse) cell.

The protein resides in the secreted. Metalloprotease. In Caenorhabditis elegans, this protein is Zinc metalloproteinase nas-22 (nas-22).